A 378-amino-acid polypeptide reads, in one-letter code: Spermidine/putrescine import ATP-binding protein PotA (378 aa).

Residues 18-248 (VQLAGIRKCF…PKNLFVTGFI (231 aa)) enclose the ABC transporter domain. 50 to 57 (GPSGCGKT) lines the ATP pocket.

The protein belongs to the ABC transporter superfamily. Spermidine/putrescine importer (TC 3.A.1.11.1) family. In terms of assembly, the complex is composed of two ATP-binding proteins (PotA), two transmembrane proteins (PotB and PotC) and a solute-binding protein (PotD).

The protein resides in the cell inner membrane. The enzyme catalyses ATP + H2O + polyamine-[polyamine-binding protein]Side 1 = ADP + phosphate + polyamineSide 2 + [polyamine-binding protein]Side 1.. In terms of biological role, part of the ABC transporter complex PotABCD involved in spermidine/putrescine import. Responsible for energy coupling to the transport system. The sequence is that of Spermidine/putrescine import ATP-binding protein PotA from Shigella flexneri serotype 5b (strain 8401).